Reading from the N-terminus, the 745-residue chain is 5-methyltetrahydropteroyltriglutamate--homocysteine methyltransferase (745 aa).

5-methyltetrahydropteroyltri-L-glutamate-binding positions include 16–19 (REWK) and K110. Residues 420–422 (IGS) and E473 each bind L-homocysteine. L-methionine contacts are provided by residues 420-422 (IGS) and E473. W550 is a binding site for 5-methyltetrahydropteroyltri-L-glutamate. L-homocysteine is bound at residue D588. D588 serves as a coordination point for L-methionine. E594 lines the 5-methyltetrahydropteroyltri-L-glutamate pocket. Zn(2+)-binding residues include H630, C632, and E654. H683 functions as the Proton donor in the catalytic mechanism. C715 is a binding site for Zn(2+).

The protein belongs to the vitamin-B12 independent methionine synthase family. Zn(2+) serves as cofactor.

The catalysed reaction is 5-methyltetrahydropteroyltri-L-glutamate + L-homocysteine = tetrahydropteroyltri-L-glutamate + L-methionine. The protein operates within amino-acid biosynthesis; L-methionine biosynthesis via de novo pathway; L-methionine from L-homocysteine (MetE route): step 1/1. Catalyzes the transfer of a methyl group from 5-methyltetrahydrofolate to homocysteine resulting in methionine formation. The chain is 5-methyltetrahydropteroyltriglutamate--homocysteine methyltransferase from Streptococcus agalactiae serotype III (strain NEM316).